We begin with the raw amino-acid sequence, 409 residues long: Bone morphogenetic protein 4 (409 aa).

A signal peptide spans 1–24 (MIPGNRMLMVVLLCQVLLGGASHA). The propeptide occupies 25–293 (SLIPETGKKK…ALTRRRRAKR (269 aa)). S91 bears the Phosphoserine mark. N-linked (GlcNAc...) asparagine glycans are attached at residues N144 and N209. Positions 284–308 (ALTRRRRAKRSPKHHPQRARKKNKN) are disordered. Cystine bridges form between C309–C374, C338–C406, and C342–C408. N-linked (GlcNAc...) asparagine glycosylation is found at N351 and N366.

It belongs to the TGF-beta family. As to quaternary structure, homodimer; disulfide-linked. Interacts with GREM2. Part of a complex consisting of TWSG1 and CHRD. Interacts with the serine proteases, HTRA1 and HTRA3; the interaction with either inhibits BMP4-mediated signaling. The HTRA protease activity is required for this inhibition. Interacts with SOSTDC1. Interacts with FBN1 (via N-terminal domain) and FBN2. Interacts with type I receptor BMPR1A. Interacts with type II receptor BMPR2. Interacts with FSTL1; this interaction inhibits the activation of the BMP4/Smad1/5/8 signaling pathway. Interacts with SCUBE3. Interacts with TGFBR3.

It is found in the secreted. It localises to the extracellular space. The protein localises to the extracellular matrix. Functionally, growth factor of the TGF-beta superfamily that plays essential roles in many developmental processes, including neurogenesis, vascular development, angiogenesis and osteogenesis. Acts in concert with PTHLH/PTHRP to stimulate ductal outgrowth during embryonic mammary development and to inhibit hair follicle induction. Initiates the canonical BMP signaling cascade by associating with type I receptor BMPR1A and type II receptor BMPR2. Once all three components are bound together in a complex at the cell surface, BMPR2 phosphorylates and activates BMPR1A. In turn, BMPR1A propagates signal by phosphorylating SMAD1/5/8 that travel to the nucleus and act as activators and repressors of transcription of target genes. Positively regulates the expression of odontogenic development regulator MSX1 via inducing the IPO7-mediated import of SMAD1 to the nucleus. Required for MSX1-mediated mesenchymal molar tooth bud development beyond the bud stage, via promoting Wnt signaling. Acts as a positive regulator of odontoblast differentiation during mesenchymal tooth germ formation, expression is repressed during the bell stage by MSX1-mediated inhibition of CTNNB1 signaling. Able to induce its own expression in dental mesenchymal cells and also in the neighboring dental epithelial cells via an MSX1-mediated pathway. Can also signal through non-canonical BMP pathways such as ERK/MAP kinase, PI3K/Akt, or SRC cascades. For example, induces SRC phosphorylation which, in turn, activates VEGFR2, leading to an angiogenic response. This is Bone morphogenetic protein 4 from Bos taurus (Bovine).